We begin with the raw amino-acid sequence, 1846 residues long: Peripheral-type benzodiazepine receptor-associated protein 1 (1846 aa).

Disordered regions lie at residues 57–97, 281–318, and 560–628; these read EESS…GYSC, NQRE…DDVE, and GPKD…SEVE. The span at 576 to 587 shows a compositional bias: polar residues; that stretch reads PKSSEPALTTLT. The segment covering 599–612 has biased composition (low complexity); sequence SLSNSSRSESIHNS. The SH3 1 domain maps to 649 to 716; it reads ARIQVFLARY…PSNFVERVSD (68 aa). Positions 726-785 are disordered; the sequence is ELADSSHSSGPELSFLSGGGGGCSSGGQSSGGRSQPRPEEEAAGDELSLSPPPEGLGEPL. Over residues 742-755 the composition is skewed to gly residues; sequence SGGGGGCSSGGQSS. 3 Fibronectin type-III domains span residues 787 to 878, 880 to 972, and 977 to 1075; these read VPYP…AGAG, VPSQ…TLPA, and APLD…PALA. Disordered stretches follow at residues 1084–1107, 1163–1219, 1243–1302, 1322–1476, 1492–1617, 1704–1755, and 1812–1846; these read SCLS…GLGD, EPTL…LDSG, HSRN…SDEE, SIPE…PESS, YDSE…QDLP, LTEA…AAQK, and VPSN…RVQC. Positions 1202 to 1219 are enriched in basic and acidic residues; it reads TQKKPSIEACHGGDLDSG. The segment covering 1251–1265 has biased composition (acidic residues); that stretch reads DIQEEEEEEEEEEEE. A compositionally biased stretch (polar residues) spans 1270–1283; it reads PCSSQKQVAGNSIR. Residues 1324–1335 show a composition bias toward acidic residues; the sequence is PEEEEEEEEEEG. Basic and acidic residues-rich tracts occupy residues 1411 to 1420 and 1545 to 1577; these read RPQDPREHCS and AWEK…ESRG. The 69-residue stretch at 1616-1684 folds into the SH3 2 domain; that stretch reads LPVRVFVALF…PCNMVAEVAV (69 aa). The span at 1705-1719 shows a compositional bias: polar residues; that stretch reads TEASGNGPSVYSSAH. The 68-residue stretch at 1755-1822 folds into the SH3 3 domain; it reads KTSRPMVAAF…PSNFLEGPGP (68 aa). Positions 1817–1830 are enriched in low complexity; sequence LEGPGPESGSLESG.

Belongs to the RIMBP family. In terms of assembly, interacts with RIMS1 and RIMS2. Interacts with TSPO. Interacts with CACNA1A. Predominantly expressed in the brain.

It is found in the cytoplasm. It localises to the mitochondrion. Functionally, required for synaptic transmission regulation. It probably controls the recruitement of voltage-gated calcium channels to the presynaptic membrane, and modulates neurotransmitter release. The protein is Peripheral-type benzodiazepine receptor-associated protein 1 of Mus musculus (Mouse).